The sequence spans 284 residues: MGNDMIQVAGRPFSLESTTDFGRVERAILQQMLDSSEWFSYSSMNELRFELNVRINIMESAKEMNASQVTFTIFEHASCNPEYWTLTSTGGFLVRSDVRPSDAILDIYRNGTLYGFECATAIIIIYYQAILKSIGQLRFDSIFQHLYLYSWHTHPGLELHTFHADRFLPGDVVYFNNPDFHPDTPWFRGENAVVLSDGTFFGHGFGIMTAEQMIQSLNSYRFPGSMQPAYLANLITRISPLTIRNLLTLQSDRTTYHYSKAVIHHNLCSISSMDYQYYLLSLNG.

Belongs to the bacillus TGase family.

It carries out the reaction L-glutaminyl-[protein] + L-lysyl-[protein] = [protein]-L-lysyl-N(6)-5-L-glutamyl-[protein] + NH4(+). Its function is as follows. Probably plays a role in the assembly of the spore coat proteins by catalyzing epsilon-(gamma-glutamyl)lysine cross-links. The polypeptide is Protein-glutamine gamma-glutamyltransferase (Halalkalibacterium halodurans (strain ATCC BAA-125 / DSM 18197 / FERM 7344 / JCM 9153 / C-125) (Bacillus halodurans)).